Here is a 1014-residue protein sequence, read N- to C-terminus: Endogenous retrovirus group K member 10 Pol protein (1014 aa).

The Reverse transcriptase domain maps to 57-245 (LEKGHIEPSF…TPFHYLGMQI (189 aa)). Positions 161–164 (LPQG) match the LPQG motif. Residues 195-198 (YIDD) carry the YXDD motif. The 131-residue stretch at 460–590 (LENALTVFTD…ADLLVSSALI (131 aa)) folds into the RNase H type-1 domain. 4 residues coordinate Mg(2+): D469, E497, D517, and D582. The Integrase-type zinc finger occupies 587–628 (SALIKAQELHALTHVNAAGLKNKFDVTWKQAKDIVQHCTQCQ). 4 residues coordinate Zn(2+): H596, H600, C624, and C627. The Integrase catalytic domain maps to 642–803 (RGLCPNALWQ…TSAEQHLTGK (162 aa)). The segment at residues 811 to 859 (KLIWWKDNKNKTWEIGKVITWGRGFACVSPGENQLPVWLPTRHLKFYNE) is a DNA-binding region (integrase-type).

The protein belongs to the beta type-B retroviral polymerase family. HERV class-II K(HML-2) pol subfamily.

It carries out the reaction DNA(n) + a 2'-deoxyribonucleoside 5'-triphosphate = DNA(n+1) + diphosphate. The catalysed reaction is Endonucleolytic cleavage to 5'-phosphomonoester.. Its function is as follows. Early post-infection, the reverse transcriptase converts the viral RNA genome into double-stranded viral DNA. The RNase H domain of the reverse transcriptase performs two functions. It degrades the RNA template and specifically removes the RNA primer from the RNA/DNA hybrid. Following nuclear import, the integrase catalyzes the insertion of the linear, double-stranded viral DNA into the host cell chromosome. Endogenous Pol proteins may have kept, lost or modified their original function during evolution. The polypeptide is Endogenous retrovirus group K member 10 Pol protein (ERVK-10) (Homo sapiens (Human)).